The following is a 530-amino-acid chain: Histone-arginine methyltransferase CARMER (530 aa).

Residues 141–450 (ASQYFQFYGY…QSYDVTIDLH (310 aa)) enclose the SAM-dependent MTase PRMT-type domain. Residues Gln154, Arg163, Gly187, Glu209, Glu238, and Thr266 each coordinate S-adenosyl-L-methionine. Arg501 carries the asymmetric dimethylarginine; by autocatalysis modification.

The protein belongs to the class I-like SAM-binding methyltransferase superfamily. Protein arginine N-methyltransferase family. As to quaternary structure, homodimer. Post-translationally, the dimethylated protein is the major form.

Its subcellular location is the cytoplasm. The protein localises to the nucleus. The enzyme catalyses L-arginyl-[protein] + 2 S-adenosyl-L-methionine = N(omega),N(omega)-dimethyl-L-arginyl-[protein] + 2 S-adenosyl-L-homocysteine + 2 H(+). Methylates (mono- and asymmetric dimethylation) the guanidino nitrogens of arginyl residues in proteins. May methylate histone H3 at 'Arg-17' and activate transcription via chromatin remodeling. This is Histone-arginine methyltransferase CARMER (Art4) from Drosophila erecta (Fruit fly).